Here is an 863-residue protein sequence, read N- to C-terminus: Protein translocase subunit SecA (863 aa).

ATP contacts are provided by residues Gln-88, 106-110, and Asp-507; that span reads GEGKT. The interval 806–863 is disordered; the sequence is KSHEQNEQFLSNTTESGVNENGEAQITKVPRNSPCPCGSGKKYKECHGKSGPKKGILA. Over residues 812-829 the composition is skewed to polar residues; that stretch reads EQFLSNTTESGVNENGEA. Residues Cys-840, Cys-842, Cys-851, and His-852 each coordinate Zn(2+).

Belongs to the SecA family. In terms of assembly, monomer and homodimer. Part of the essential Sec protein translocation apparatus which comprises SecA, SecYEG and auxiliary proteins SecDF-YajC and YidC. Zn(2+) is required as a cofactor.

Its subcellular location is the cell inner membrane. The protein localises to the cytoplasm. The catalysed reaction is ATP + H2O + cellular proteinSide 1 = ADP + phosphate + cellular proteinSide 2.. Part of the Sec protein translocase complex. Interacts with the SecYEG preprotein conducting channel. Has a central role in coupling the hydrolysis of ATP to the transfer of proteins into and across the cell membrane, serving as an ATP-driven molecular motor driving the stepwise translocation of polypeptide chains across the membrane. This chain is Protein translocase subunit SecA, found in Campylobacter lari (strain RM2100 / D67 / ATCC BAA-1060).